We begin with the raw amino-acid sequence, 322 residues long: Phosphoenolpyruvate transferase (322 aa).

7,8-didemethyl-8-hydroxy-5-deazariboflavin is bound at residue Asp-58.

Belongs to the CofD family. As to quaternary structure, homodimer. The cofactor is Mg(2+).

The catalysed reaction is enolpyruvoyl-2-diphospho-5'-guanosine + 7,8-didemethyl-8-hydroxy-5-deazariboflavin = dehydro coenzyme F420-0 + GMP + H(+). The protein operates within cofactor biosynthesis; coenzyme F420 biosynthesis. Its function is as follows. Catalyzes the transfer of the phosphoenolpyruvate moiety from enoylpyruvoyl-2-diphospho-5'-guanosine (EPPG) to 7,8-didemethyl-8-hydroxy-5-deazariboflavin (FO) with the formation of dehydro coenzyme F420-0 and GMP. The polypeptide is Phosphoenolpyruvate transferase (Thermobifida fusca (strain YX)).